The chain runs to 612 residues: MFS siderochrome iron transporter B (612 aa).

At 1-86 (MLHVLSVGPS…GAQAGVKKIE (86 aa)) the chain is on the cytoplasmic side. Residues 55–78 (DKEAAHAPANAETNNEEANPSDGA) are disordered. A compositionally biased stretch (low complexity) spans 60-72 (HAPANAETNNEEA). Residues 87–104 (AVTLSWTRGTAIWFLTLV) traverse the membrane as a helical segment. The Extracellular portion of the chain corresponds to 105–127 (NDFRLSMYTSLNAYATSSFLGHS). Residues 128 to 148 (LLTVINIVSYVMGGSVYIPMA) traverse the membrane as a helical segment. Topologically, residues 149–156 (KALDLWGR) are cytoplasmic. A helical membrane pass occupies residues 157 to 177 (AEGFLLMTFFCILGLILLASS). At 178 to 187 (QNLPTYCAGQ) the chain is on the extracellular side. The chain crosses the membrane as a helical span at residues 188 to 208 (VFYKVGFGGLSYTWNVLAADV). At 209–215 (TNLRNRG) the chain is on the cytoplasmic side. The chain crosses the membrane as a helical span at residues 216–236 (LAFAFTSSPALISAFAGSKAA). Topologically, residues 237–246 (SDLLAHSTWR) are extracellular. Residues 247–267 (WGFGMWAIILPVVALPIYGLL) traverse the membrane as a helical segment. The Cytoplasmic segment spans residues 268–302 (AYHLRQAEKKGVLVKETRDWSITPKTVWWAIMEFD). A helical membrane pass occupies residues 303–323 (LPGVLLFAGGFVIFLLPFTLA). The Extracellular segment spans residues 324–334 (ATAPHGYQTDY). Residues 335 to 355 (IIAMITLGLALIIAFGFYEML) form a helical membrane-spanning segment. Residues 356 to 370 (VAPVPFLNYKFLIDR) are Cytoplasmic-facing. A helical transmembrane segment spans residues 371 to 393 (TVLGACLLDMTYQVSYYCYASYL). Topologically, residues 394–409 (PSFLQVVYELDVATAG) are extracellular. A helical transmembrane segment spans residues 410-430 (YVTNTFSVVSFVFLFFAGWLI). At 431–435 (RWTGR) the chain is on the cytoplasmic side. Residues 436 to 456 (FKWILWVCVPLYIFGLGLMIH) form a helical membrane-spanning segment. The Extracellular segment spans residues 457–463 (FRQPGGY). A helical transmembrane segment spans residues 464–484 (IGYIVMCEIFFSVAGSVFILC). The Cytoplasmic segment spans residues 485–498 (VQLAVLASVDHQHV). Residues 499-519 (AAVLALLFVMGSIGGSIGSAI) traverse the membrane as a helical segment. Over 520–575 (CGAIWTSTFLSRLERNLPASAMPDLSLIYSSLPTQLSYPVGSATRTAIVEAYGYAQ) the chain is Extracellular. The chain crosses the membrane as a helical span at residues 576-596 (ARMLIAGTAFMVLGFIWVGMM). The Cytoplasmic portion of the chain corresponds to 597–612 (RNLNVKNMTQTKGNVV).

The protein belongs to the major facilitator superfamily.

Its subcellular location is the cell tip. It localises to the cytoplasmic vesicle membrane. The protein localises to the cell membrane. Its function is as follows. Major facilitator transporter involved in triacetylfusarinine C (TAFC) uptake. Can also transport ferricrocin and coprogen, but not ferrichrysin. MirB plays a crucial role for virulence in a murine model of pulmonary aspergillosis, indicating that TAFC-mediated iron uptake plays a dominant role during infection. This is MFS siderochrome iron transporter B from Aspergillus fumigatus (strain ATCC MYA-4609 / CBS 101355 / FGSC A1100 / Af293) (Neosartorya fumigata).